The primary structure comprises 255 residues: Small ribosomal subunit protein uS10m (255 aa).

The N-terminal 32 residues, 1 to 32, are a transit peptide targeting the mitochondrion; it reads MALPAARSALSARAFIRPAAALNAAASSSRYL. 2 disordered regions span residues 30–52 and 220–255; these read RYLS…NSET and SEGE…AKSS. The segment covering 236–255 has biased composition (basic and acidic residues); it reads DAAREEKPAEKLKEEEAKSS.

Belongs to the universal ribosomal protein uS10 family. Part of the mitochondrial small ribosomal subunit.

It localises to the mitochondrion. Its function is as follows. Involved in mitochondrial genome encoded proteins translation. Involved in the binding of tRNA to the ribosomes. This is Small ribosomal subunit protein uS10m (RSM10) from Cryptococcus neoformans var. neoformans serotype D (strain B-3501A) (Filobasidiella neoformans).